The chain runs to 571 residues: Germacrene B synthase TPS16CC (571 aa).

(2E,6E)-farnesyl diphosphate is bound by residues Arg-287, Asp-324, Asp-328, Arg-465, and Asp-468. Positions 324 and 328 each coordinate Mg(2+). A DDXXD motif motif is present at residues 324–328 (DDIYD). Mg(2+)-binding residues include Asp-468, Ser-472, and Glu-476.

It belongs to the terpene synthase family. Tpsb subfamily. Mg(2+) is required as a cofactor. Requires Mn(2+) as cofactor. Highly expressed in glandular trichomes.

It catalyses the reaction (2E,6E)-farnesyl diphosphate = (1E,4E)-germacrene B + diphosphate. The protein operates within secondary metabolite biosynthesis; terpenoid biosynthesis. Functionally, involved in sesquiterpene olefins biosynthesis, constituants of cannabinoids and terpenoids-rich resins. Catalyzes mainly the conversion of (2E)-farnesyl diphosphate to germacrene B, which is spontaneously converted to gamma-elemene as a thermal degradation product. The protein is Germacrene B synthase TPS16CC of Cannabis sativa (Hemp).